Here is a 316-residue protein sequence, read N- to C-terminus: Protein U25 (316 aa).

The protein belongs to the herpesviridae US22 family.

This Human herpesvirus 6B (HHV-6 variant B) protein is Protein U25 (U25).